A 101-amino-acid chain; its full sequence is Apolipoprotein C-II (101 aa).

The N-terminal stretch at 1–22 (MGTRCLLVLLLVLLVLRCDVQG) is a signal peptide. A propeptide spans 23 to 28 (DDMARQ) (removed in mature form). Positions 66-74 (AVDEKIRDM) are lipid binding. The interval 78–101 (STAAVRIYTGILTDQILSMLSGDS) is lipoprotein lipase cofactor.

It belongs to the apolipoprotein C2 family. Post-translationally, proapolipoprotein C-II is synthesized as a sialic acid containing glycoprotein which is subsequently desialylated prior to its proteolytic processing. Proapolipoprotein C-II, the major form found in plasma undergoes proteolytic cleavage of its N-terminal hexapeptide to generate the mature form apolipoprotein C-II, which occurs as the minor form in plasma.

The protein resides in the secreted. Its function is as follows. Component of chylomicrons, very low-density lipoproteins (VLDL), low-density lipoproteins (LDL), and high-density lipoproteins (HDL) in plasma. Plays an important role in lipoprotein metabolism as an activator of lipoprotein lipase, the enzyme which hydrolyzes the triacylglycerols on chylomicrons and VLDL. The polypeptide is Apolipoprotein C-II (APOC2) (Acinonyx jubatus (Cheetah)).